The chain runs to 411 residues: MATALSPPRGPKLKGAPPSHYYESFLEKKGPCDQDYRKFWAGLQGLAICFYNSNRDLQPLEKLDLRLFSKLRDEALLGSSRDTAYHFSLVLRDQEVKFKVESLESCEMWKGFILTVVELRVPSNLTLLPGHLYMMAEVLTKEEVRRAAEVPWCFLQVSRLEAQLLLERYPECGNLLLRPGGDGKDSVSVTTRQILNGSPVVKHYKVKRAGSKYVIDVEDPFSCPSLEAVVNYFVTHTKRALVPFLLDEDYEKVLGFVDSDRENGESAWAVPSFRASGPALPANVLKPLPPVPVSVSSQEDKLPQLPPLPQLPDTDENYVTPIEDSPAAEYMNQDVSLSSQAVPLKPKKPARLPAKPPKPSVVPKPDLKAITSVWTRKLGGSSSQASSLVTRLGDITAELEEKLQKRRALEH.

The region spanning 20-120 (HYYESFLEKK…GFILTVVELR (101 aa)) is the PH domain. Tyr22 carries the post-translational modification Phosphotyrosine. One can recognise an SH2 domain in the interval 152–248 (WCFLQVSRLE…RALVPFLLDE (97 aa)). Tyr250 is subject to Phosphotyrosine; by PTK6. Positions 291–320 (VPVSVSSQEDKLPQLPPLPQLPDTDENYVT) are disordered. Phosphotyrosine occurs at positions 318 and 330. The tract at residues 338-364 (SSQAVPLKPKKPARLPAKPPKPSVVPK) is disordered. Positions 390 to 410 (TRLGDITAELEEKLQKRRALE) form a coiled coil.

As to quaternary structure, interacts with PTK6 and CSF1R. Phosphorylated on tyrosine. Phosphorylated by PTK6 at Tyr-250 modulates PTK6-mediated STAT3 activation. In terms of tissue distribution, widely expressed.

It localises to the cytoplasm. Its subcellular location is the membrane. Its function is as follows. Substrate of protein kinase PTK6. May play a regulatory role in the acute-phase response in systemic inflammation and may modulate STAT3 activity. The polypeptide is Signal-transducing adaptor protein 2 (Stap2) (Mus musculus (Mouse)).